The following is a 593-amino-acid chain: Cell surface glycoprotein (593 aa).

The N-terminal stretch at 1–22 (MRKFTLLMLLLIVISMSGIAGA) is a signal peptide. N-linked (GalNAc...) asparagine glycans are attached at residues asparagine 29, asparagine 58, asparagine 66, asparagine 74, asparagine 114, asparagine 122, asparagine 145, asparagine 148, asparagine 158, asparagine 176, asparagine 208, asparagine 231, asparagine 326, asparagine 336, asparagine 340, asparagine 431, asparagine 471, asparagine 500, and asparagine 516.

Post-translationally, N-glycosylated; contains glycans composed of methyl-Man, Man and GalNAc residues in a molar ratio of 2:3:1.

The protein resides in the secreted. Its subcellular location is the cell wall. The protein localises to the S-layer. Functionally, the S-layer is a paracrystalline mono-layered assembly of proteins which coat the surface of the cell. The protein is Cell surface glycoprotein (slgA) of Methanothermus fervidus (strain ATCC 43054 / DSM 2088 / JCM 10308 / V24 S).